A 55-amino-acid polypeptide reads, in one-letter code: Eclosion hormone (55 aa).

The protein belongs to the insect eclosion hormone family.

The protein localises to the secreted. Neuropeptide that triggers the performance of ecdysis behaviors at the end of a molt. It triggers adult behavior patterns: larval, pupal and adult ecdysis, and plasticization during the molt. This is Eclosion hormone from Romalea microptera (Eastern lubber grasshopper).